A 207-amino-acid chain; its full sequence is dITP/XTP pyrophosphatase (207 aa).

7 to 12 (SNNAKK) contacts substrate. Asp72 (proton acceptor) is an active-site residue. Asp72 contacts Mg(2+). Residues Ser73, 155 to 158 (FGYD), Lys184, and 189 to 190 (HR) each bind substrate.

The protein belongs to the HAM1 NTPase family. Homodimer. Mg(2+) is required as a cofactor.

The catalysed reaction is XTP + H2O = XMP + diphosphate + H(+). The enzyme catalyses dITP + H2O = dIMP + diphosphate + H(+). It carries out the reaction ITP + H2O = IMP + diphosphate + H(+). Functionally, pyrophosphatase that catalyzes the hydrolysis of nucleoside triphosphates to their monophosphate derivatives, with a high preference for the non-canonical purine nucleotides XTP (xanthosine triphosphate), dITP (deoxyinosine triphosphate) and ITP. Seems to function as a house-cleaning enzyme that removes non-canonical purine nucleotides from the nucleotide pool, thus preventing their incorporation into DNA/RNA and avoiding chromosomal lesions. The sequence is that of dITP/XTP pyrophosphatase from Corynebacterium efficiens (strain DSM 44549 / YS-314 / AJ 12310 / JCM 11189 / NBRC 100395).